A 701-amino-acid chain; its full sequence is Ribosomal RNA large subunit methyltransferase K/L (701 aa).

The THUMP domain occupies L43–L154.

The protein belongs to the methyltransferase superfamily. RlmKL family.

The protein resides in the cytoplasm. The catalysed reaction is guanosine(2445) in 23S rRNA + S-adenosyl-L-methionine = N(2)-methylguanosine(2445) in 23S rRNA + S-adenosyl-L-homocysteine + H(+). It carries out the reaction guanosine(2069) in 23S rRNA + S-adenosyl-L-methionine = N(2)-methylguanosine(2069) in 23S rRNA + S-adenosyl-L-homocysteine + H(+). Its function is as follows. Specifically methylates the guanine in position 2445 (m2G2445) and the guanine in position 2069 (m7G2069) of 23S rRNA. This chain is Ribosomal RNA large subunit methyltransferase K/L, found in Klebsiella pneumoniae subsp. pneumoniae (strain ATCC 700721 / MGH 78578).